The sequence spans 239 residues: DNA repair protein RecO (239 aa).

This sequence belongs to the RecO family.

Its function is as follows. Involved in DNA repair and RecF pathway recombination. The sequence is that of DNA repair protein RecO from Glaesserella parasuis serovar 5 (strain SH0165) (Haemophilus parasuis).